Here is a 1317-residue protein sequence, read N- to C-terminus: Nucleoporin NUP145 (1317 aa).

The segment covering 1–16 (MFNKSVNSGFTFGNQN) has biased composition (polar residues). The disordered stretch occupies residues 1–36 (MFNKSVNSGFTFGNQNTSTPTSTPAQPSSSLQFPQK). An FG 1 repeat occupies 12-13 (FG). Residues 17 to 30 (TSTPTSTPAQPSSS) are compositionally biased toward low complexity. The GLFG 1 repeat unit spans residues 39-42 (GLFG). One copy of the FG 2 repeat lies at 79–80 (FG). A GLFG 2 repeat occupies 89-92 (GLFG). The FG 3 repeat unit spans residues 106-107 (FG). Residues 133 to 165 (QNGGLFGNSNNNNITSTTQNGGLFGKPTTTPAG) are disordered. GLFG repeat units follow at residues 136-139 (GLFG), 154-157 (GLFG), 168-171 (GLFG), and 181-184 (GLFG). Positions 139 to 164 (GNSNNNNITSTTQNGGLFGKPTTTPA) are enriched in low complexity. One copy of the GLFG 7; approximate repeat lies at 193 to 196 (GIFG). Residues 206 to 209 (GLFG) form a GLFG 8 repeat. Positions 249–278 (TSSLSDVNGKSDAEPKPIENRRTYSFSSSV) are disordered. Over residues 257 to 270 (GKSDAEPKPIENRR) the composition is skewed to basic and acidic residues. Serine 273 carries the phosphoserine modification. A Bipartite nuclear localization signal motif is present at residues 369-385 (RKLKIDSNRSAAKKLKL). The tract at residues 390-450 (PAITKKHMQD…NLNKQDGENT (61 aa)) is disordered. A required for autocatalytic cleavage region spans residues 398–523 (QDEQDSSENE…FGKIVIFRSS (126 aa)). A phosphoserine mark is found at serine 403, serine 404, and serine 414. Residues 418-427 (IDRKENRDNN) show a composition bias toward basic and acidic residues. Residues 428-444 (LDNTYLNGKEQSNNLNK) are compositionally biased toward polar residues. In terms of domain architecture, Peptidase S59 spans 458–605 (SFGYWCSPSP…GTWTFKVNHF (148 aa)). Residues 460–604 (GYWCSPSPEQ…GGTWTFKVNH (145 aa)) are nucleoporin RNA-binding motif (NRM). 3 positions are modified to phosphoserine: serine 667, serine 679, and serine 689. Threonine 751 is subject to Phosphothreonine.

It belongs to the nucleoporin GLFG family. In terms of assembly, component of the nuclear pore complex (NPC). NPC constitutes the exclusive means of nucleocytoplasmic transport. NPCs allow the passive diffusion of ions and small molecules and the active, nuclear transport receptor-mediated bidirectional transport of macromolecules such as proteins, RNAs, ribonucleoparticles (RNPs), and ribosomal subunits across the nuclear envelope. Due to its 8-fold rotational symmetry, all subunits are present with 8 copies or multiples thereof. NUP145C is part of the heptameric 0.5 MDa autoassembling NUP84 NPC subcomplex (NUP84, NUP85, NUP120, NUP133, NUP145C, SEC13 and SEH1). NUP145N may bind homomeric RNA and interacts through its FG repeats with karyopherins. Interacts with MLP1 and MLP2. In terms of processing, NUP145 is autocatalytically cleaved in NUP145N and NUP145C.

It is found in the nucleus. The protein resides in the nuclear pore complex. The protein localises to the nucleus membrane. Functionally, functions as a component of the nuclear pore complex (NPC). NPC components, collectively referred to as nucleoporins (NUPs), can play the role of both NPC structural components and of docking or interaction partners for transiently associated nuclear transport factors. Active directional transport is assured by both, a Phe-Gly (FG) repeat affinity gradient for these transport factors across the NPC and a transport cofactor concentration gradient across the nuclear envelope (GSP1 and GSP2 GTPases associated predominantly with GTP in the nucleus, with GDP in the cytoplasm). NUP145 is autocatalytically cleaved in vivo in 2 polypeptides which assume different functions in the NPC. NUP145N as one of the FG repeat nucleoporins participates in karyopherin interactions and contains part of the autocatalytic cleavage activity. NUP145C as part of the NUP84 complex is involved in nuclear poly(A)+ RNA and tRNA export. It is also required for normal NPC distribution (probably through interactions with MLP1 and MLP2) and NPC assembly, as well as for normal nuclear envelope organization. This Saccharomyces cerevisiae (strain ATCC 204508 / S288c) (Baker's yeast) protein is Nucleoporin NUP145 (NUP145).